The following is a 58-amino-acid chain: Succinate dehydrogenase subunit 8A, mitochondrial (58 aa).

As to quaternary structure, component of complex II composed of eight subunits in plants: four classical SDH subunits SDH1, SDH2, SDH3 and SDH4 (a flavoprotein (FP), an iron-sulfur protein (IP), and a cytochrome b composed of a large and a small subunit.), as well as four subunits unknown in mitochondria from bacteria and heterotrophic eukaryotes.

The protein localises to the mitochondrion inner membrane. Its pathway is carbohydrate metabolism; tricarboxylic acid cycle. The sequence is that of Succinate dehydrogenase subunit 8A, mitochondrial from Oryza sativa subsp. japonica (Rice).